A 607-amino-acid chain; its full sequence is UvrABC system protein C (607 aa).

The GIY-YIG domain maps to 29 to 106 (DKPGVYLMKD…IKKHNPKYNI (78 aa)). The UVR domain maps to 211–246 (GAILKALEKKMKEASENLEFERAKEYRDLMEDLKKV).

The protein belongs to the UvrC family. As to quaternary structure, interacts with UvrB in an incision complex.

The protein resides in the cytoplasm. Its function is as follows. The UvrABC repair system catalyzes the recognition and processing of DNA lesions. UvrC both incises the 5' and 3' sides of the lesion. The N-terminal half is responsible for the 3' incision and the C-terminal half is responsible for the 5' incision. In Desulfitobacterium hafniense (strain Y51), this protein is UvrABC system protein C.